Reading from the N-terminus, the 176-residue chain is Macro domain-containing protein LMOf2365_2748 (176 aa).

One can recognise a Macro domain in the interval 1–175 (MEITVVKGDI…LYNKLINSEV (175 aa)).

It belongs to the MacroD-type family.

This chain is Macro domain-containing protein LMOf2365_2748, found in Listeria monocytogenes serotype 4b (strain F2365).